A 192-amino-acid chain; its full sequence is Adenylate kinase (192 aa).

10 to 18 contributes to the ATP binding site; the sequence is GVPGVGSTT.

The protein belongs to the archaeal adenylate kinase family. In terms of assembly, monomer.

The protein localises to the cytoplasm. The catalysed reaction is AMP + ATP = 2 ADP. This is Adenylate kinase (adkA) from Methanococcus voltae.